The chain runs to 359 residues: DNA polymerase IV (359 aa).

The UmuC domain maps to 7-188 (IIHIDMDAFY…IPIGKFFGVG (182 aa)). Mg(2+) contacts are provided by Asp-11 and Asp-106. The active site involves Glu-107.

This sequence belongs to the DNA polymerase type-Y family. As to quaternary structure, monomer. The cofactor is Mg(2+).

It localises to the cytoplasm. It catalyses the reaction DNA(n) + a 2'-deoxyribonucleoside 5'-triphosphate = DNA(n+1) + diphosphate. Its function is as follows. Poorly processive, error-prone DNA polymerase involved in untargeted mutagenesis. Copies undamaged DNA at stalled replication forks, which arise in vivo from mismatched or misaligned primer ends. These misaligned primers can be extended by PolIV. Exhibits no 3'-5' exonuclease (proofreading) activity. May be involved in translesional synthesis, in conjunction with the beta clamp from PolIII. This chain is DNA polymerase IV, found in Clostridium perfringens (strain ATCC 13124 / DSM 756 / JCM 1290 / NCIMB 6125 / NCTC 8237 / Type A).